A 148-amino-acid chain; its full sequence is ATP synthase epsilon chain (148 aa).

This sequence belongs to the ATPase epsilon chain family. As to quaternary structure, F-type ATPases have 2 components, CF(1) - the catalytic core - and CF(0) - the membrane proton channel. CF(1) has five subunits: alpha(3), beta(3), gamma(1), delta(1), epsilon(1). CF(0) has three main subunits: a, b and c.

The protein resides in the cell inner membrane. Its function is as follows. Produces ATP from ADP in the presence of a proton gradient across the membrane. In Paracoccus denitrificans (strain Pd 1222), this protein is ATP synthase epsilon chain.